A 576-amino-acid chain; its full sequence is Plant intracellular Ras-group-related LRR protein 4 (576 aa).

Positions 130-151 are enriched in low complexity; sequence AAPAAATTTTSTAAAGSSSSSA. Residues 130-181 form a disordered region; the sequence is AAPAAATTTTSTAAAGSSSSSAVGNAERHASSGTNGFTASRVAGTSTSTGRV. The segment covering 160–180 has biased composition (polar residues); that stretch reads SSGTNGFTASRVAGTSTSTGR. 11 LRR repeats span residues 272–295, 296–318, 320–341, 342–364, 366–387, 389–410, 411–433, 434–456, 458–481, 482–503, and 505–527; these read LTGLVTLDISENRLLALPDAIGKL, FSLAKLDIHANRISQLPESIGDL, SLIYLNMRGNQLSSLPSSIGRL, LNLEELDVGSNGLSSLPDSIGSL, RLKKLIVETNDLDELPYTIGHC, SLVELQAGYNHLKALPEAVGKL, EPLEILSVRYNNLRSLPTTMASL, TKLKEVDVSFNELESIPENFCFA, SLIKLNVGNNFADLQYLPRSIGNL, EMLEELDMSNNQIRVLPDSFGN, and KHLRVLRAEENPLQVPPRDIALK. The GVYW; degenerate motif lies at 528-535; that stretch reads GAQAVVQY.

The protein belongs to the SHOC2 family. In terms of tissue distribution, widely expressed.

Leucine-rich repeat protein that likely mediates protein interactions, possibly in the context of signal transduction. The sequence is that of Plant intracellular Ras-group-related LRR protein 4 (IRL4) from Oryza sativa subsp. japonica (Rice).